A 685-amino-acid polypeptide reads, in one-letter code: Allergen Cr-PI (685 aa).

An N-terminal signal peptide occupies residues 1-16 (MKTALVFAAVVAFVAA). N-linked (GlcNAc...) asparagine glycosylation is present at Asn233.

This sequence belongs to the hemocyanin family.

It is found in the secreted. It localises to the extracellular space. In terms of biological role, larval storage protein (LSP) which may serve as a store of amino acids for synthesis of adult proteins. The sequence is that of Allergen Cr-PI from Periplaneta americana (American cockroach).